The following is a 430-amino-acid chain: MDAQAAARLGDEIAHGFGVAAMVAGAVAGALIGAAVVAATAATGGLAAVILAGSIAAGGLSMFQIVKGLTTIFELPEPTTGVLIRGSFNVYVNSRNAMRAGDDVSATCSGLPLNHPLWPFPVLIAEGSATVYINGKPAARLQSKMVCGAHIKTGSQNTFIGGPTERVAFVLDLEEWLHTGLEALGLAALAGGLLLAAMAGVAALVGVVAIGGLMMGGMALLGDLGDRLGPGYRDLFQGVAGMALLGFGPKLAGRRPAAVTSETAQRRAYLNNKFGRSGNLDHDINYRGNRETAAKFFKSKDIDPADAESYMNGLDFNHPVRVETLAPGKNLWQYQSPGAPQGNWYTLSPRVQPTELGINPMGTNRAANTIEPKVLNSYRTTQKVEVLRSTAAPTDDFWSVKGQSYPAKGGAQQLFSNEKGSFGLLPREGS.

Helical transmembrane passes span 17-37, 46-66, and 193-213; these read FGVAAMVAGAVAGALIGAAVV, LAAVILAGSIAAGGLSMFQIV, and LLLAAMAGVAALVGVVAIGGL.

Interacts with Tsi6, VgrG1a, EagT6 and EF-Tu.

The protein localises to the membrane. The catalysed reaction is NAD(+) + H2O = ADP-D-ribose + nicotinamide + H(+). Type VI secretion exported toxin that acts as a glycohydrolase on bacterial target cells and degrades the essential dinucleotides NAD(+) and NADP(+), thereby inducing bacteriostasis. The activity resides in the C-terminal region that is initially neutralized by the cognate immunity protein Tsi6. This is NAD(P)(+) glycohydrolase toxin Tse6 from Pseudomonas aeruginosa (strain ATCC 15692 / DSM 22644 / CIP 104116 / JCM 14847 / LMG 12228 / 1C / PRS 101 / PAO1).